The following is a 235-amino-acid chain: Probable RNA 2'-phosphotransferase (235 aa).

This sequence belongs to the KptA/TPT1 family.

Its function is as follows. Removes the 2'-phosphate from RNA via an intermediate in which the phosphate is ADP-ribosylated by NAD followed by a presumed transesterification to release the RNA and generate ADP-ribose 1''-2''-cyclic phosphate (APPR&gt;P). May function as an ADP-ribosylase. This is Probable RNA 2'-phosphotransferase from Thermoplasma volcanium (strain ATCC 51530 / DSM 4299 / JCM 9571 / NBRC 15438 / GSS1).